We begin with the raw amino-acid sequence, 484 residues long: tRNA sulfurtransferase (484 aa).

A THUMP domain is found at 63-167 (ELFAERLAHI…RDKLYMVSQR (105 aa)). ATP is bound by residues 185 to 186 (LI), lysine 267, glycine 289, and glutamine 298. A disulfide bridge connects residues cysteine 346 and cysteine 458. The 79-residue stretch at 406-484 (AAGNEVIIDI…GYNNVKVYRP (79 aa)) folds into the Rhodanese domain. Cysteine 458 functions as the Cysteine persulfide intermediate in the catalytic mechanism.

This sequence belongs to the ThiI family.

The protein localises to the cytoplasm. It carries out the reaction [ThiI sulfur-carrier protein]-S-sulfanyl-L-cysteine + a uridine in tRNA + 2 reduced [2Fe-2S]-[ferredoxin] + ATP + H(+) = [ThiI sulfur-carrier protein]-L-cysteine + a 4-thiouridine in tRNA + 2 oxidized [2Fe-2S]-[ferredoxin] + AMP + diphosphate. It catalyses the reaction [ThiS sulfur-carrier protein]-C-terminal Gly-Gly-AMP + S-sulfanyl-L-cysteinyl-[cysteine desulfurase] + AH2 = [ThiS sulfur-carrier protein]-C-terminal-Gly-aminoethanethioate + L-cysteinyl-[cysteine desulfurase] + A + AMP + 2 H(+). It functions in the pathway cofactor biosynthesis; thiamine diphosphate biosynthesis. In terms of biological role, catalyzes the ATP-dependent transfer of a sulfur to tRNA to produce 4-thiouridine in position 8 of tRNAs, which functions as a near-UV photosensor. Also catalyzes the transfer of sulfur to the sulfur carrier protein ThiS, forming ThiS-thiocarboxylate. This is a step in the synthesis of thiazole, in the thiamine biosynthesis pathway. The sulfur is donated as persulfide by IscS. This chain is tRNA sulfurtransferase, found in Shewanella amazonensis (strain ATCC BAA-1098 / SB2B).